The primary structure comprises 300 residues: MQTDLSDSSFFNHKSVMTDEIMASLEHYPLIHNNQLKGIDATLGGGGHSFNLLRKYSELNIIGLDQDPFARISASKKLDEFKNRIDIRASNFADFVPKEKVSFVIADLGVNSNQIDDPKRGFSFQKDGPLDMRMNPLLEVDAEKLIEALNEKDLANLIYKYGDERLSRKIARKIKLDLKENGKYSGTKELAYSIAGCFPPKQRYKKIHPATRTFQALRIAVNKEIEVLEKFLQAVPEWLLPGGIISIISFHSLEDRLVKSSFKNDQRLKNLTKKPITPSEQEVEFNKRARSGKLRIAQLK.

Residues 46–48, Asp65, Phe92, Asp107, and Gln114 contribute to the S-adenosyl-L-methionine site; that span reads GGH.

This sequence belongs to the methyltransferase superfamily. RsmH family.

It localises to the cytoplasm. The catalysed reaction is cytidine(1402) in 16S rRNA + S-adenosyl-L-methionine = N(4)-methylcytidine(1402) in 16S rRNA + S-adenosyl-L-homocysteine + H(+). Functionally, specifically methylates the N4 position of cytidine in position 1402 (C1402) of 16S rRNA. This chain is Ribosomal RNA small subunit methyltransferase H, found in Prochlorococcus marinus (strain MIT 9215).